The sequence spans 563 residues: Alpha-humulene synthase (563 aa).

Mg(2+)-binding residues include D316, D320, D461, and E469. A DDXXD motif motif is present at residues 316 to 320 (DDIYD).

It belongs to the terpene synthase family. Tpsa subfamily. Mg(2+) is required as a cofactor. It depends on Mn(2+) as a cofactor. As to expression, expressed in trichomes, cones and young leaves.

The catalysed reaction is (2E,6E)-farnesyl diphosphate = alpha-humulene + diphosphate. The protein operates within sesquiterpene biosynthesis. Its pathway is secondary metabolite biosynthesis; terpenoid biosynthesis. In terms of biological role, sesquiterpene synthase that catalyzes the formation of alpha-humulene. Can use farnesyl diphosphate (FPP) as substrate, but not geranyl diphosphate (GPP) or geranylgeranyl diphosphate (GGPP). This is Alpha-humulene synthase from Humulus lupulus (European hop).